Here is a 453-residue protein sequence, read N- to C-terminus: MPFIPHTEAEVRDMLAAIGAGSIDELFAEIPPDLRCGELKDLPEALSEMEVCKLMEERAAENRSALCFAGAGAYEHYIPAAVWEIALRGEFYSAYTPYQAEASQGSLQVFYEYQSMMAGLMAMDVSNASLYDGASALGEAILMALRTNPESRSRKILLPRSLNPVYKRVVRTLTRNQRVELVDLDYDRSLGRIAENALETFEGGEFAAVVIPQPNHFGVLEEVDVLADWAHRHGARSIAVVNPTAMALLKPPGEWGEHGADLACGEGQPLGIPLSAGGPYFGFLCSRQDFVHQLPGRLVGRTVDVDGREGFTLTLQPREQHIRRGKATSNICTNQGLMVTAATLYMALMGPKGLRNVAAACHANASALLERLTRIDGVEPVFPAPFFHEAAIRLPRAADRVLAGLAERGILGGHVLSADYPELGDALLICATETRGPEDMDRYAAALAEVLEC.

This sequence belongs to the GcvP family. N-terminal subunit subfamily. As to quaternary structure, the glycine cleavage system is composed of four proteins: P, T, L and H. In this organism, the P 'protein' is a heterodimer of two subunits.

The enzyme catalyses N(6)-[(R)-lipoyl]-L-lysyl-[glycine-cleavage complex H protein] + glycine + H(+) = N(6)-[(R)-S(8)-aminomethyldihydrolipoyl]-L-lysyl-[glycine-cleavage complex H protein] + CO2. The glycine cleavage system catalyzes the degradation of glycine. The P protein binds the alpha-amino group of glycine through its pyridoxal phosphate cofactor; CO(2) is released and the remaining methylamine moiety is then transferred to the lipoamide cofactor of the H protein. This Methylococcus capsulatus (strain ATCC 33009 / NCIMB 11132 / Bath) protein is Probable glycine dehydrogenase (decarboxylating) subunit 1.